We begin with the raw amino-acid sequence, 157 residues long: Crossover junction endodeoxyribonuclease RuvC (157 aa).

Active-site residues include D7, E67, and D140. D7, E67, and D140 together coordinate Mg(2+).

Belongs to the RuvC family. Homodimer which binds Holliday junction (HJ) DNA. The HJ becomes 2-fold symmetrical on binding to RuvC with unstacked arms; it has a different conformation from HJ DNA in complex with RuvA. In the full resolvosome a probable DNA-RuvA(4)-RuvB(12)-RuvC(2) complex forms which resolves the HJ. Mg(2+) is required as a cofactor.

The protein resides in the cytoplasm. The enzyme catalyses Endonucleolytic cleavage at a junction such as a reciprocal single-stranded crossover between two homologous DNA duplexes (Holliday junction).. In terms of biological role, the RuvA-RuvB-RuvC complex processes Holliday junction (HJ) DNA during genetic recombination and DNA repair. Endonuclease that resolves HJ intermediates. Cleaves cruciform DNA by making single-stranded nicks across the HJ at symmetrical positions within the homologous arms, yielding a 5'-phosphate and a 3'-hydroxyl group; requires a central core of homology in the junction. The consensus cleavage sequence is 5'-(A/T)TT(C/G)-3'. Cleavage occurs on the 3'-side of the TT dinucleotide at the point of strand exchange. HJ branch migration catalyzed by RuvA-RuvB allows RuvC to scan DNA until it finds its consensus sequence, where it cleaves and resolves the cruciform DNA. This Rickettsia massiliae (strain Mtu5) protein is Crossover junction endodeoxyribonuclease RuvC.